The following is an 89-amino-acid chain: Large ribosomal subunit protein eL34 (89 aa).

The segment at 1 to 22 (MPAPRYKSGSSKKVYRKAPGNS) is disordered.

This sequence belongs to the eukaryotic ribosomal protein eL34 family.

The protein is Large ribosomal subunit protein eL34 of Methanococcus maripaludis (strain DSM 14266 / JCM 13030 / NBRC 101832 / S2 / LL).